The following is a 183-amino-acid chain: Peptide deformylase (183 aa).

C110 and H153 together coordinate Fe cation. E154 is a catalytic residue. Residue H157 coordinates Fe cation.

The protein belongs to the polypeptide deformylase family. Fe(2+) serves as cofactor.

The catalysed reaction is N-terminal N-formyl-L-methionyl-[peptide] + H2O = N-terminal L-methionyl-[peptide] + formate. Its function is as follows. Removes the formyl group from the N-terminal Met of newly synthesized proteins. Requires at least a dipeptide for an efficient rate of reaction. N-terminal L-methionine is a prerequisite for activity but the enzyme has broad specificity at other positions. This Listeria monocytogenes serotype 4a (strain HCC23) protein is Peptide deformylase.